Reading from the N-terminus, the 482-residue chain is ATP synthase subunit beta (482 aa).

161–168 provides a ligand contact to ATP; it reads GGAGVGKT.

Belongs to the ATPase alpha/beta chains family. As to quaternary structure, F-type ATPases have 2 components, CF(1) - the catalytic core - and CF(0) - the membrane proton channel. CF(1) has five subunits: alpha(3), beta(3), gamma(1), delta(1), epsilon(1). CF(0) has three main subunits: a(1), b(2) and c(9-12). The alpha and beta chains form an alternating ring which encloses part of the gamma chain. CF(1) is attached to CF(0) by a central stalk formed by the gamma and epsilon chains, while a peripheral stalk is formed by the delta and b chains.

Its subcellular location is the cell inner membrane. It catalyses the reaction ATP + H2O + 4 H(+)(in) = ADP + phosphate + 5 H(+)(out). Its function is as follows. Produces ATP from ADP in the presence of a proton gradient across the membrane. The catalytic sites are hosted primarily by the beta subunits. The polypeptide is ATP synthase subunit beta (Solibacter usitatus (strain Ellin6076)).